The sequence spans 460 residues: tRNA modification GTPase MnmE (460 aa).

Positions 22, 87, and 126 each coordinate (6S)-5-formyl-5,6,7,8-tetrahydrofolate. The TrmE-type G domain occupies 222 to 381 (GLKTAIIGKP…LENTIYNLVF (160 aa)). Residue N232 coordinates K(+). Residues 232-237 (NVGKSS), 251-257 (TDIPGTT), and 276-279 (DTAG) contribute to the GTP site. Position 236 (S236) interacts with Mg(2+). K(+) contacts are provided by T251, I253, and T256. T257 contributes to the Mg(2+) binding site. K460 is a (6S)-5-formyl-5,6,7,8-tetrahydrofolate binding site.

It belongs to the TRAFAC class TrmE-Era-EngA-EngB-Septin-like GTPase superfamily. TrmE GTPase family. As to quaternary structure, homodimer. Heterotetramer of two MnmE and two MnmG subunits. K(+) serves as cofactor.

The protein localises to the cytoplasm. In terms of biological role, exhibits a very high intrinsic GTPase hydrolysis rate. Involved in the addition of a carboxymethylaminomethyl (cmnm) group at the wobble position (U34) of certain tRNAs, forming tRNA-cmnm(5)s(2)U34. In Thermoanaerobacter pseudethanolicus (strain ATCC 33223 / 39E) (Clostridium thermohydrosulfuricum), this protein is tRNA modification GTPase MnmE.